Reading from the N-terminus, the 572-residue chain is DNA polymerase (572 aa).

Positions 1–222 are 3'-5' exonuclease and strand displacement activities; that stretch reads MPRKMYSCDF…LGLDKEVRYA (222 aa). The interaction with the primer terminal protein stretch occupies residues 56-66; that stretch reads YFHNLKFDGAF. Mg(2+) is bound by residues D142 and D166. Residues 223–226 form a DNA-binding; Involved in the formation of a stable complex between TP and phi29 DNA polymerase region; that stretch reads YRGG. The segment at 227–572 is initiation, polymerization and pyrophosphorolytic activities; that stretch reads FTWLNDRFKE…VLVDDTFTIK (346 aa). Mg(2+)-binding residues include D246 and V247. 5-methyl-UTP is bound by residues Y251, K368, and K380. D453 and D455 together coordinate Mg(2+). A 5-methyl-UTP-binding site is contributed by D455.

Belongs to the DNA polymerase type-B family. As to quaternary structure, interacts with the primer terminal protein; this interaction allows the initiation of TP-primed DNA replication at both viral DNA ends. Interacts with DNA. Mg(2+) serves as cofactor.

The enzyme catalyses DNA(n) + a 2'-deoxyribonucleoside 5'-triphosphate = DNA(n+1) + diphosphate. Polymerase responsible for protein-primed viral DNA replication by strand displacement with high processivity and fidelity. To start replication, the DNA polymerase forms a heterodimer with a free primer terminal protein (TP), recognizes the replication origins at both 5' ends of the linear chromosome, and initiates replication using as primer the OH-group of Ser-232 of the TP. This polymerase possesses three enzymatic activities: DNA synthesis (polymerase), primer terminal protein (TP) deoxynucleotidylation, which is the formation of a covalent linkage (phosphoester) between the hydroxyl group of a specific serine residue in TP and 5'-dAMP, a reaction directed by the second T at the 3' end, and 3' to 5' exonuclease activity. Exonuclease activity has a proofreading purpose. This chain is DNA polymerase (2), found in Bacillus subtilis (Bacteriophage PZA).